Consider the following 207-residue polypeptide: MERESGCAAAGETEAAAATAFRDATRQISNERGFENVELGVMGKKKKVPRRVIHFVSGETMEEYSTDEDEVDGLDKKDVLPTVDPTKLTWGPYLWFYMLRAATSTLSVCDFLGEKIASVLGISTPKYQYAIDEYYRMKKEEEEEEEENRMSEEAERQYQQNKLQADSIVQTDQPETVSSSFVNINFEMEEDCEAIKENKQRPVSVPP.

Position 1 is an N-acetylmethionine (M1). The residue at position 65 (S65) is a Phosphoserine. Phosphothreonine is present on T66. Residues 131-170 (IDEYYRMKKEEEEEEEENRMSEEAERQYQQNKLQADSIVQ) adopt a coiled-coil conformation. The disordered stretch occupies residues 142-176 (EEEEEENRMSEEAERQYQQNKLQADSIVQTDQPET). Over residues 157–176 (QYQQNKLQADSIVQTDQPET) the composition is skewed to polar residues.

Belongs to the FAM177 family.

This is Protein FAM177A1 (Fam177a1) from Mus musculus (Mouse).